The primary structure comprises 610 residues: tRNA uridine 5-carboxymethylaminomethyl modification enzyme MnmG (610 aa).

14-19 (GAGHAG) is an FAD binding site. Residue 274-288 (GPRYCPSIEDKIVKF) participates in NAD(+) binding.

This sequence belongs to the MnmG family. As to quaternary structure, homodimer. Heterotetramer of two MnmE and two MnmG subunits. FAD is required as a cofactor.

The protein localises to the cytoplasm. In terms of biological role, NAD-binding protein involved in the addition of a carboxymethylaminomethyl (cmnm) group at the wobble position (U34) of certain tRNAs, forming tRNA-cmnm(5)s(2)U34. In Chlamydia trachomatis serovar A (strain ATCC VR-571B / DSM 19440 / HAR-13), this protein is tRNA uridine 5-carboxymethylaminomethyl modification enzyme MnmG.